Here is a 71-residue protein sequence, read N- to C-terminus: Small ribosomal subunit protein bS21 (71 aa).

The protein belongs to the bacterial ribosomal protein bS21 family.

The polypeptide is Small ribosomal subunit protein bS21 (Ruthia magnifica subsp. Calyptogena magnifica).